A 610-amino-acid polypeptide reads, in one-letter code: UvrABC system protein C (610 aa).

The region spanning 16–94 is the GIY-YIG domain; it reads SQPGVYRMYD…IKLYQPRYNV (79 aa). Residues 204–239 enclose the UVR domain; sequence DQVLTQLISRMETASQNLEFEEAARIRDQIQAVRRV.

This sequence belongs to the UvrC family. Interacts with UvrB in an incision complex.

It localises to the cytoplasm. Its function is as follows. The UvrABC repair system catalyzes the recognition and processing of DNA lesions. UvrC both incises the 5' and 3' sides of the lesion. The N-terminal half is responsible for the 3' incision and the C-terminal half is responsible for the 5' incision. This chain is UvrABC system protein C, found in Escherichia coli O45:K1 (strain S88 / ExPEC).